The following is a 608-amino-acid chain: Albumin 1 (608 aa).

A signal peptide spans 1 to 14 (MQWLSVCSLLVLLS). Positions 15–18 (VLSR) are excised as a propeptide. 3 Albumin domains span residues 19–205 (SQAQ…TFQH), 206–398 (AVMK…AGSD), and 402–600 (KITD…KLVS). Cystine bridges form between cysteine 26/cysteine 72, cysteine 71/cysteine 80, cysteine 93/cysteine 108, cysteine 107/cysteine 118, cysteine 142/cysteine 187, cysteine 186/cysteine 195, cysteine 218/cysteine 264, cysteine 263/cysteine 271, cysteine 283/cysteine 299, cysteine 298/cysteine 309, cysteine 336/cysteine 381, cysteine 380/cysteine 389, cysteine 414/cysteine 460, cysteine 459/cysteine 471, cysteine 484/cysteine 500, cysteine 499/cysteine 510, cysteine 537/cysteine 582, and cysteine 581/cysteine 590. The N-linked (GlcNAc...) asparagine glycan is linked to asparagine 501.

It belongs to the ALB/AFP/VDB family. As to expression, plasma.

It is found in the secreted. Functionally, binds water, Ca(2+), Na(+), K(+), fatty acids, hormones, bilirubin and drugs. Its main function is the regulation of the colloidal osmotic pressure of blood. The protein is Albumin 1 (alb1) of Salmo salar (Atlantic salmon).